Reading from the N-terminus, the 808-residue chain is Leucine--tRNA ligase (808 aa).

Positions 40-51 match the 'HIGH' region motif; the sequence is PYPSGQGLHVGH. The short motif at 580–584 is the 'KMSKS' region element; the sequence is KMSKS. K583 serves as a coordination point for ATP.

The protein belongs to the class-I aminoacyl-tRNA synthetase family.

It is found in the cytoplasm. It catalyses the reaction tRNA(Leu) + L-leucine + ATP = L-leucyl-tRNA(Leu) + AMP + diphosphate. This chain is Leucine--tRNA ligase, found in Leuconostoc mesenteroides subsp. mesenteroides (strain ATCC 8293 / DSM 20343 / BCRC 11652 / CCM 1803 / JCM 6124 / NCDO 523 / NBRC 100496 / NCIMB 8023 / NCTC 12954 / NRRL B-1118 / 37Y).